The sequence spans 111 residues: Cornifelin (111 aa).

The protein belongs to the cornifelin family. In terms of assembly, directly or indirectly cross-linked to CE proteins loricin and involucrin (IVL).

Its subcellular location is the cytoplasm. Its function is as follows. Part of the insoluble cornified cell envelope (CE) of stratified squamous epithelia. This is Cornifelin (Cnfn) from Mus musculus (Mouse).